The following is a 366-amino-acid chain: Beta sliding clamp (366 aa).

Belongs to the beta sliding clamp family. As to quaternary structure, forms a ring-shaped head-to-tail homodimer around DNA which binds and tethers DNA polymerases and other proteins to the DNA. The DNA replisome complex has a single clamp-loading complex (3 tau and 1 each of delta, delta', psi and chi subunits) which binds 3 Pol III cores (1 core on the leading strand and 2 on the lagging strand) each with a beta sliding clamp dimer. Additional proteins in the replisome are other copies of gamma, psi and chi, Ssb, DNA helicase and RNA primase.

It localises to the cytoplasm. Confers DNA tethering and processivity to DNA polymerases and other proteins. Acts as a clamp, forming a ring around DNA (a reaction catalyzed by the clamp-loading complex) which diffuses in an ATP-independent manner freely and bidirectionally along dsDNA. Initially characterized for its ability to contact the catalytic subunit of DNA polymerase III (Pol III), a complex, multichain enzyme responsible for most of the replicative synthesis in bacteria; Pol III exhibits 3'-5' exonuclease proofreading activity. The beta chain is required for initiation of replication as well as for processivity of DNA replication. This Salmonella typhimurium (strain LT2 / SGSC1412 / ATCC 700720) protein is Beta sliding clamp (dnaN).